The primary structure comprises 112 residues: Larval cuticle protein 4 (112 aa).

An N-terminal signal peptide occupies residues 1–16 (MFKILLVCALVALVAA). In terms of domain architecture, Chitin-binding type R&amp;R spans 31 to 92 (ADGFVSKLVL…PQSDLLPTPP (62 aa)).

Component of the larval cuticle. This chain is Larval cuticle protein 4 (Lcp4), found in Drosophila melanogaster (Fruit fly).